Reading from the N-terminus, the 343-residue chain is 4-hydroxythreonine-4-phosphate dehydrogenase (343 aa).

Positions 141 and 142 each coordinate substrate. A divalent metal cation-binding residues include His-175, His-220, and His-275. Substrate contacts are provided by Lys-283, Asn-292, and Arg-301.

Belongs to the PdxA family. In terms of assembly, homodimer. Zn(2+) is required as a cofactor. Mg(2+) serves as cofactor. The cofactor is Co(2+).

The protein resides in the cytoplasm. It carries out the reaction 4-(phosphooxy)-L-threonine + NAD(+) = 3-amino-2-oxopropyl phosphate + CO2 + NADH. The protein operates within cofactor biosynthesis; pyridoxine 5'-phosphate biosynthesis; pyridoxine 5'-phosphate from D-erythrose 4-phosphate: step 4/5. In terms of biological role, catalyzes the NAD(P)-dependent oxidation of 4-(phosphooxy)-L-threonine (HTP) into 2-amino-3-oxo-4-(phosphooxy)butyric acid which spontaneously decarboxylates to form 3-amino-2-oxopropyl phosphate (AHAP). This Janthinobacterium sp. (strain Marseille) (Minibacterium massiliensis) protein is 4-hydroxythreonine-4-phosphate dehydrogenase.